The sequence spans 326 residues: Malate dehydrogenase (326 aa).

11–17 (GAAGQIG) is an NAD(+) binding site. Residues R92 and R98 each coordinate substrate. NAD(+)-binding positions include N105, Q112, and 129–131 (VGN). Substrate-binding residues include N131 and R162. The active-site Proton acceptor is the H187.

It belongs to the LDH/MDH superfamily. MDH type 2 family.

The enzyme catalyses (S)-malate + NAD(+) = oxaloacetate + NADH + H(+). In terms of biological role, catalyzes the reversible oxidation of malate to oxaloacetate. The chain is Malate dehydrogenase from Halorhodospira halophila (strain DSM 244 / SL1) (Ectothiorhodospira halophila (strain DSM 244 / SL1)).